The chain runs to 173 residues: Large ribosomal subunit protein uL10 (173 aa).

This sequence belongs to the universal ribosomal protein uL10 family. As to quaternary structure, part of the ribosomal stalk of the 50S ribosomal subunit. The N-terminus interacts with L11 and the large rRNA to form the base of the stalk. The C-terminus forms an elongated spine to which L12 dimers bind in a sequential fashion forming a multimeric L10(L12)X complex.

Its function is as follows. Forms part of the ribosomal stalk, playing a central role in the interaction of the ribosome with GTP-bound translation factors. This is Large ribosomal subunit protein uL10 from Cupriavidus pinatubonensis (strain JMP 134 / LMG 1197) (Cupriavidus necator (strain JMP 134)).